The sequence spans 110 residues: uncharacterized protein (110 aa).

The signal sequence occupies residues 1–19; that stretch reads MKYLVGCLCLAAICLSAGA. N-linked (GlcNAc...) asparagine glycosylation is present at Asn-101.

As to expression, component of the acid-soluble and acid-insoluble organic matrix of prismatic shell layers (at protein level).

The protein resides in the secreted. This is an uncharacterized protein from Haliotis asinina (Donkey's ear abalone).